A 678-amino-acid polypeptide reads, in one-letter code: Glycine--tRNA ligase beta subunit (678 aa).

Belongs to the class-II aminoacyl-tRNA synthetase family. Tetramer of two alpha and two beta subunits.

It localises to the cytoplasm. It catalyses the reaction tRNA(Gly) + glycine + ATP = glycyl-tRNA(Gly) + AMP + diphosphate. The sequence is that of Glycine--tRNA ligase beta subunit from Streptococcus thermophilus (strain ATCC BAA-491 / LMD-9).